A 215-amino-acid polypeptide reads, in one-letter code: Elongation factor Ts (215 aa).

The tract at residues 80 to 83 (TDFV) is involved in Mg(2+) ion dislocation from EF-Tu.

It belongs to the EF-Ts family.

It localises to the cytoplasm. Functionally, associates with the EF-Tu.GDP complex and induces the exchange of GDP to GTP. It remains bound to the aminoacyl-tRNA.EF-Tu.GTP complex up to the GTP hydrolysis stage on the ribosome. This Heliobacterium modesticaldum (strain ATCC 51547 / Ice1) protein is Elongation factor Ts.